The following is a 397-amino-acid chain: Elongation factor Tu (397 aa).

Residues 10 to 207 (KPHVNVGTIG…TLDTYIPEPV (198 aa)) form the tr-type G domain. Residues 19–26 (GHVDHGKT) form a G1 region. GTP is bound at residue 19 to 26 (GHVDHGKT). Thr26 serves as a coordination point for Mg(2+). Residues 60–64 (GITIN) form a G2 region. Residues 81 to 84 (DCPG) form a G3 region. Residues 81–85 (DCPGH) and 136–139 (NKAD) each bind GTP. The segment at 136–139 (NKAD) is G4. The tract at residues 174-176 (SAL) is G5.

The protein belongs to the TRAFAC class translation factor GTPase superfamily. Classic translation factor GTPase family. EF-Tu/EF-1A subfamily. Monomer.

It localises to the cytoplasm. It carries out the reaction GTP + H2O = GDP + phosphate + H(+). In terms of biological role, GTP hydrolase that promotes the GTP-dependent binding of aminoacyl-tRNA to the A-site of ribosomes during protein biosynthesis. The sequence is that of Elongation factor Tu from Ectopseudomonas mendocina (strain ymp) (Pseudomonas mendocina).